We begin with the raw amino-acid sequence, 404 residues long: O-antigen ligase (404 aa).

Transmembrane regions (helical) follow at residues 16–32, 39–55, 67–84, 96–115, 127–147, 168–183, 189–221, 228–246, 324–343, 363–379, and 385–401; these read IWNK…YFLD, HLII…QVSR, SVFY…YSIL, FENT…PVLL, VLFS…ILYI, SMVF…WLFR, LVFL…GVLW, WKLI…ALVI, ILYI…VYLY, YNAH…FYIV, and QVDI…LLAL.

The protein belongs to the O-antigen ligase family.

It localises to the cell inner membrane. It catalyses the reaction a lipid-linked O antigen + a lipid A-core oligosaccharide = a lipopolysaccharide + a polyisoprenyl diphosphate.. It participates in bacterial outer membrane biogenesis; lipopolysaccharide biosynthesis. Transferase involved in the biosynthesis of the lipopolysaccharide (LPS). Catalyzes the transfer of a polymerized O-antigen molecule from its polyprenyl diphosphate membrane anchor to a terminal sugar of the lipid A-core oligosaccharide, finalizing the biosynthesis of the lipopolysaccharide. May also be involved in a feedback mechanism to regulate O-unit synthesis, based on the availability of O units on the periplasmic face of the membrane. The chain is O-antigen ligase from Salmonella typhimurium (strain LT2 / SGSC1412 / ATCC 700720).